A 211-amino-acid chain; its full sequence is Large ribosomal subunit protein uL4 (211 aa).

A disordered region spans residues 44–90 (ERQGTHSTLTKGEVRGGGKKPWRQKHTGKARTGSTRNPHWTGGGVVF). A compositionally biased stretch (basic residues) spans 60–72 (GGKKPWRQKHTGK).

This sequence belongs to the universal ribosomal protein uL4 family. In terms of assembly, part of the 50S ribosomal subunit.

One of the primary rRNA binding proteins, this protein initially binds near the 5'-end of the 23S rRNA. It is important during the early stages of 50S assembly. It makes multiple contacts with different domains of the 23S rRNA in the assembled 50S subunit and ribosome. In terms of biological role, forms part of the polypeptide exit tunnel. The chain is Large ribosomal subunit protein uL4 from Ureaplasma urealyticum serovar 10 (strain ATCC 33699 / Western).